Reading from the N-terminus, the 211-residue chain is Protein-L-isoaspartate O-methyltransferase (211 aa).

S62 is a catalytic residue.

This sequence belongs to the methyltransferase superfamily. L-isoaspartyl/D-aspartyl protein methyltransferase family.

Its subcellular location is the cytoplasm. It catalyses the reaction [protein]-L-isoaspartate + S-adenosyl-L-methionine = [protein]-L-isoaspartate alpha-methyl ester + S-adenosyl-L-homocysteine. Catalyzes the methyl esterification of L-isoaspartyl residues in peptides and proteins that result from spontaneous decomposition of normal L-aspartyl and L-asparaginyl residues. It plays a role in the repair and/or degradation of damaged proteins. The chain is Protein-L-isoaspartate O-methyltransferase from Shewanella frigidimarina (strain NCIMB 400).